The sequence spans 586 residues: Urease subunit alpha (586 aa).

The 453-residue stretch at 134–586 (GAIDTHIHFI…LPMAQRYFLF (453 aa)) folds into the Urease domain. The Ni(2+) site is built by His139, His141, and Lys222. Lys222 carries the N6-carboxylysine modification. His224 serves as a coordination point for substrate. 2 residues coordinate Ni(2+): His251 and His277. His325 functions as the Proton donor in the catalytic mechanism. Asp365 is a binding site for Ni(2+).

It belongs to the metallo-dependent hydrolases superfamily. Urease alpha subunit family. As to quaternary structure, heterotrimer of UreA (gamma), UreB (beta) and UreC (alpha) subunits. Three heterotrimers associate to form the active enzyme. Ni cation serves as cofactor. Post-translationally, carboxylation allows a single lysine to coordinate two nickel ions.

It localises to the cytoplasm. The enzyme catalyses urea + 2 H2O + H(+) = hydrogencarbonate + 2 NH4(+). The protein operates within nitrogen metabolism; urea degradation; CO(2) and NH(3) from urea (urease route): step 1/1. This is Urease subunit alpha from Gloeothece citriformis (strain PCC 7424) (Cyanothece sp. (strain PCC 7424)).